The following is a 496-amino-acid chain: Glutamyl-tRNA(Gln) amidotransferase subunit A (496 aa).

Residues Lys75 and Ser150 each act as charge relay system in the active site. The active-site Acyl-ester intermediate is Ser174.

Belongs to the amidase family. GatA subfamily. In terms of assembly, heterotrimer of A, B and C subunits.

It catalyses the reaction L-glutamyl-tRNA(Gln) + L-glutamine + ATP + H2O = L-glutaminyl-tRNA(Gln) + L-glutamate + ADP + phosphate + H(+). Functionally, allows the formation of correctly charged Gln-tRNA(Gln) through the transamidation of misacylated Glu-tRNA(Gln) in organisms which lack glutaminyl-tRNA synthetase. The reaction takes place in the presence of glutamine and ATP through an activated gamma-phospho-Glu-tRNA(Gln). This chain is Glutamyl-tRNA(Gln) amidotransferase subunit A, found in Burkholderia pseudomallei (strain 668).